Reading from the N-terminus, the 468-residue chain is Cyclin-dependent kinase 14 (468 aa).

Ser-24, Ser-77, and Ser-94 each carry phosphoserine. The segment at 102 to 131 (FKSSSAGKESPKVRRHSSPSSPTSPKFGKA) is disordered. Phosphoserine is present on Ser-133. The Protein kinase domain maps to 134-418 (YEKLEKLGEG…AQAALSHEYF (285 aa)). Residues 140-148 (LGEGSYATV) and Lys-163 contribute to the ATP site. The active-site Proton acceptor is Asp-255. The tract at residues 448-468 (ESMRAFGKNSSYGKSLSNSKH) is disordered. The span at 455–468 (KNSSYGKSLSNSKH) shows a compositional bias: polar residues.

This sequence belongs to the protein kinase superfamily. CMGC Ser/Thr protein kinase family. CDC2/CDKX subfamily. Found in a complex with LRP6, CCNY and CAPRIN2 during G2/M stage; CAPRIN2 functions as a scaffold for the complex by binding to CCNY via its N terminus and to CDK14 via its C terminus. Interacts with CCNY; CCNY mediates its recruitment to the plasma membrane and promotes phosphorylation of LRP6. Interacts with CCDN3 and CDKN1A. Interacts with SEPT8. Interacts with 14-3-3 proteina YWHAB, YWHAE, YWHAH and YWHAQ.

It is found in the cell membrane. It localises to the cytoplasm. Its subcellular location is the nucleus. The catalysed reaction is L-seryl-[protein] + ATP = O-phospho-L-seryl-[protein] + ADP + H(+). It carries out the reaction L-threonyl-[protein] + ATP = O-phospho-L-threonyl-[protein] + ADP + H(+). Its activity is regulated as follows. Serine/threonine-protein kinase activity is promoted by associated cyclins CCDN3 and CCNY and repressed by CDKN1A. Functionally, serine/threonine-protein kinase involved in the control of the eukaryotic cell cycle, whose activity is controlled by an associated cyclin. Acts as a cell-cycle regulator of Wnt signaling pathway during G2/M phase by mediating the phosphorylation of LRP6 at 'Ser-1490', leading to the activation of the Wnt signaling pathway. Acts as a regulator of cell cycle progression and cell proliferation via its interaction with CCDN3. Phosphorylates RB1 in vitro, however the relevance of such result remains to be confirmed in vivo. May also play a role in meiosis, neuron differentiation and may indirectly act as a negative regulator of insulin-responsive glucose transport. This is Cyclin-dependent kinase 14 (CDK14) from Oryctolagus cuniculus (Rabbit).